The following is an 888-amino-acid chain: Potassium channel AKT6 (888 aa).

Over Met1 to Glu84 the chain is Cytoplasmic. The disordered stretch occupies residues Gly10–Asp31. Residues Thr85–Leu105 form a helical membrane-spanning segment. Topologically, residues Gln106–Ser113 are extracellular. The helical transmembrane segment at Ile114–Ala134 threads the bilayer. The Cytoplasmic segment spans residues Phe135–Ala155. Residues Ser156–Leu176 traverse the membrane as a helical segment. Over His177–Gly184 the chain is Extracellular. A helical; Voltage-sensor transmembrane segment spans residues Ile185–Glu205. At Lys206–Lys219 the chain is on the cytoplasmic side. A helical membrane pass occupies residues Leu220–Ala240. Residues His241–Asn267 lie on the Extracellular side of the membrane. Residues Thr268–Gly287 constitute an intramembrane region (pore-forming). The Extracellular portion of the chain corresponds to Val288–Arg291. Residues Glu292–Gly312 form a helical membrane-spanning segment. The Cytoplasmic segment spans residues Asn313 to Pro888. Residue Leu398–Lys519 coordinates a nucleoside 3',5'-cyclic phosphate. ANK repeat units lie at residues Asp543 to Glu572, Asp576 to Ile605, Glu609 to Leu638, Ser640 to Leu669, and Asn673 to Trp702. In terms of domain architecture, KHA spans Arg822 to Pro888.

The protein belongs to the potassium channel family. Plant (TC 1.A.1.4) subfamily. The potassium channel is probably composed of a homo- or heterotetrameric complex of pore-forming subunits. Predominantly expressed in flowers; especially in pollen.

Its subcellular location is the membrane. Functionally, highly selective inward-rectifying potassium channel that could mediate potassium uptake in the pollen membrane. Plays an important role in pollen tube development. Assuming opened or closed conformations in response to the voltage difference across the membrane, the channel is activated by hyperpolarization. May interact with the cytoskeleton or with regulatory proteins. This is Potassium channel AKT6 (AKT6) from Arabidopsis thaliana (Mouse-ear cress).